The following is a 90-amino-acid chain: Acyl-CoA-binding protein (90 aa).

Basic and acidic residues predominate over residues 1 to 16 (MGLKEDFEEHAEKAKT). The interval 1–20 (MGLKEDFEEHAEKAKTLPEN) is disordered. One can recognise an ACB domain in the interval 3–88 (LKEDFEEHAE…VKQLLGEAAA (86 aa)). An acyl-CoA contacts are provided by residues 30-34 (YGLYK), K56, and Y75.

This sequence belongs to the ACBP family.

In terms of biological role, binds medium- and long-chain acyl-CoA esters with very high affinity and may function as an intracellular carrier of acyl-CoA esters. The polypeptide is Acyl-CoA-binding protein (Ricinus communis (Castor bean)).